The sequence spans 191 residues: Inosine triphosphate pyrophosphatase (191 aa).

T15–K20 contacts ITP. E43 is a binding site for Mg(2+). ITP contacts are provided by residues K55, D71–T72, K88, F147–D150, K168, and H173–R174.

This sequence belongs to the HAM1 NTPase family. As to quaternary structure, homodimer. Requires Mg(2+) as cofactor. Mn(2+) is required as a cofactor.

The protein resides in the cytoplasm. It localises to the nucleus. The catalysed reaction is ITP + H2O = IMP + diphosphate + H(+). It catalyses the reaction dITP + H2O = dIMP + diphosphate + H(+). The enzyme catalyses XTP + H2O = XMP + diphosphate + H(+). Functionally, pyrophosphatase that hydrolyzes non-canonical purine nucleotides such as inosine triphosphate (ITP), deoxyinosine triphosphate (dITP) or xanthosine 5'-triphosphate (XTP) to their respective monophosphate derivatives. The enzyme does not distinguish between the deoxy- and ribose forms. Probably excludes non-canonical purines from RNA and DNA precursor pools, thus preventing their incorporation into RNA and DNA and avoiding chromosomal lesions. The polypeptide is Inosine triphosphate pyrophosphatase (Neurospora crassa (strain ATCC 24698 / 74-OR23-1A / CBS 708.71 / DSM 1257 / FGSC 987)).